The following is a 251-amino-acid chain: 5'-nucleotidase SurE (251 aa).

A divalent metal cation is bound by residues aspartate 8, aspartate 9, serine 42, and asparagine 94.

This sequence belongs to the SurE nucleotidase family. A divalent metal cation is required as a cofactor.

The protein localises to the cytoplasm. The enzyme catalyses a ribonucleoside 5'-phosphate + H2O = a ribonucleoside + phosphate. In terms of biological role, nucleotidase that shows phosphatase activity on nucleoside 5'-monophosphates. The sequence is that of 5'-nucleotidase SurE from Hydrogenovibrio crunogenus (strain DSM 25203 / XCL-2) (Thiomicrospira crunogena).